A 764-amino-acid chain; its full sequence is 5-methyltetrahydropteroyltriglutamate--homocysteine methyltransferase (764 aa).

Residues 16 to 19 (RELK) and Lys117 each bind 5-methyltetrahydropteroyltri-L-glutamate. L-homocysteine-binding positions include 442 to 444 (IGS) and Glu495. Residues 442-444 (IGS) and Glu495 each bind L-methionine. 5-methyltetrahydropteroyltri-L-glutamate contacts are provided by residues 526-527 (RC) and Trp572. Asp610 contacts L-homocysteine. Asp610 contacts L-methionine. Residue Glu616 participates in 5-methyltetrahydropteroyltri-L-glutamate binding. Residues His652, Cys654, and Glu676 each coordinate Zn(2+). His705 acts as the Proton donor in catalysis. Cys737 contributes to the Zn(2+) binding site.

It belongs to the vitamin-B12 independent methionine synthase family. The cofactor is Zn(2+).

It carries out the reaction 5-methyltetrahydropteroyltri-L-glutamate + L-homocysteine = tetrahydropteroyltri-L-glutamate + L-methionine. It participates in amino-acid biosynthesis; L-methionine biosynthesis via de novo pathway; L-methionine from L-homocysteine (MetE route): step 1/1. In terms of biological role, catalyzes the transfer of a methyl group from 5-methyltetrahydrofolate to homocysteine resulting in methionine formation. This is 5-methyltetrahydropteroyltriglutamate--homocysteine methyltransferase from Bordetella petrii (strain ATCC BAA-461 / DSM 12804 / CCUG 43448).